The following is a 1358-amino-acid chain: Phosphoinositide 3-kinase regulatory subunit 4 (1358 aa).

Residue Gly2 is the site of N-myristoyl glycine attachment. The Protein kinase domain occupies 26–324 (FEYDKSLGST…AFPEIFYTFL (299 aa)). ATP-binding positions include 32-40 (LGSTRFFKV) and Lys53. Asp148 serves as the catalytic Proton acceptor. HEAT repeat units lie at residues 373–411 (NGLV…RLGV), 413–450 (ILLD…LVKE), 458–495 (IYPE…TALR), 531–570 (QALH…FFGR), 572–610 (KAND…YVGW), 612–648 (SSSI…LGLL), and 690–726 (DVYC…PVSR). Ser808, Ser813, Ser853, and Ser865 each carry phosphoserine. A disordered region spans residues 875 to 899 (LPKGSDQEVIQTGKPPRSESSAGIC). WD repeat units follow at residues 991-1030 (EHKS…GKTT), 1040-1079 (RVGG…LPKS), 1093-1134 (KEDG…NAWT), 1139-1178 (LKSG…PISS), 1182-1223 (PSRA…RRFT), and 1237-1278 (PSPH…RSYV). Residues 1307-1326 (KQKVGPSDDTPRRGPESLPV) form a disordered region. Basic and acidic residues predominate over residues 1315–1326 (DTPRRGPESLPV). Thr1316 bears the Phosphothreonine mark. A WD 7 repeat occupies 1327 to 1358 (GHHDIITDVATFQTTQGFIVTASRDGIVKVWK).

The protein belongs to the protein kinase superfamily. Ser/Thr protein kinase family. Component of the PI3K (PI3KC3/PI3K-III/class III phosphatidylinositol 3-kinase) complex the core of which is composed of the catalytic subunit PIK3C3, the regulatory subunit PIK3R4 and BECN1 associating with additional regulatory/auxiliary subunits to form alternative complex forms. Alternative complex forms containing a fourth regulatory subunit in a mutually exclusive manner are PI3K complex I (PI3KC3-C1) containing ATG14, and PI3K complex II (PI3KC3-C2) containing UVRAG. PI3KC3-C1 displays a V-shaped architecture with PIK3R4 serving as a bridge between PIK3C3 and the ATG14:BECN1 subcomplex. Both, PI3KC3-C1 and PI3KC3-C2, can associate with further regulatory subunits, such as RUBCN, SH3GLB1/Bif-1, AMBRA1 and NRBF2. PI3KC3-C1 probably associates with PIK3CB. Interacts with RAB7A in the presence of PIK3C3/VPS34. Interacts with NRBF2. Interacts with ARMC3. The cofactor is Mn(2+). In terms of processing, myristoylated. Post-translationally, probably autophosphorylated.

The protein localises to the late endosome. It is found in the cytoplasmic vesicle. The protein resides in the autophagosome. Its subcellular location is the membrane. It carries out the reaction L-seryl-[protein] + ATP = O-phospho-L-seryl-[protein] + ADP + H(+). It catalyses the reaction L-threonyl-[protein] + ATP = O-phospho-L-threonyl-[protein] + ADP + H(+). Regulatory subunit of the PI3K complex that mediates formation of phosphatidylinositol 3-phosphate; different complex forms are believed to play a role in multiple membrane trafficking pathways: PI3KC3-C1 is involved in initiation of autophagosomes and PI3KC3-C2 in maturation of autophagosomes and endocytosis. Involved in regulation of degradative endocytic trafficking and cytokinesis, probably in the context of PI3KC3-C2. Its function is as follows. Regulatory subunit of the PI3K complex. May regulate membrane trafficking late in the endocytic pathway. This Pongo abelii (Sumatran orangutan) protein is Phosphoinositide 3-kinase regulatory subunit 4 (PIK3R4).